Here is a 103-residue protein sequence, read N- to C-terminus: UPF0235 protein RHECIAT_CH0004196 (103 aa).

The protein belongs to the UPF0235 family.

In Rhizobium etli (strain CIAT 652), this protein is UPF0235 protein RHECIAT_CH0004196.